The chain runs to 458 residues: Phosphoglucosamine mutase (458 aa).

S108 functions as the Phosphoserine intermediate in the catalytic mechanism. Mg(2+) is bound by residues S108, D247, D249, and D251. S108 is modified (phosphoserine).

This sequence belongs to the phosphohexose mutase family. The cofactor is Mg(2+). Post-translationally, activated by phosphorylation.

The enzyme catalyses alpha-D-glucosamine 1-phosphate = D-glucosamine 6-phosphate. In terms of biological role, catalyzes the conversion of glucosamine-6-phosphate to glucosamine-1-phosphate. The chain is Phosphoglucosamine mutase from Thiobacillus denitrificans (strain ATCC 25259 / T1).